The following is a 356-amino-acid chain: DNA-directed RNA polymerase subunit alpha (356 aa).

The interval 1-230 (MNLHRISSEP…DLLKPLLKVE (230 aa)) is alpha N-terminal domain (alpha-NTD). The segment at 267-356 (IDQPLLPADS…IRKSYGHILG (90 aa)) is alpha C-terminal domain (alpha-CTD).

The protein belongs to the RNA polymerase alpha chain family. In terms of assembly, in plastids the minimal PEP RNA polymerase catalytic core is composed of four subunits: alpha, beta, beta', and beta''. When a (nuclear-encoded) sigma factor is associated with the core the holoenzyme is formed, which can initiate transcription.

The protein localises to the plastid. It is found in the chloroplast. It carries out the reaction RNA(n) + a ribonucleoside 5'-triphosphate = RNA(n+1) + diphosphate. Its function is as follows. DNA-dependent RNA polymerase catalyzes the transcription of DNA into RNA using the four ribonucleoside triphosphates as substrates. This Zygnema circumcarinatum (Green alga) protein is DNA-directed RNA polymerase subunit alpha.